The following is a 222-amino-acid chain: MAKIYIVGTPIGNLSDITLRALETLKKVDYIACEDTRVSKILLNHYQINKPLFSYHKFNEKSKLNYIFELVESGSDVALISDSGMPVISDPGFLLIREAKKKNIDLEVIPGVSAFSMAFVKSSFPLPFSFLGFLNDKTGKRKNELKKLSAGISYISYVSKYKLIQTLKDLKEVFGLNVEVFLTRELTKKFENDYTGTIDEIIDQLGESIKGEFTLIFFIKQA.

Belongs to the methyltransferase superfamily. RsmI family.

The protein localises to the cytoplasm. It carries out the reaction cytidine(1402) in 16S rRNA + S-adenosyl-L-methionine = 2'-O-methylcytidine(1402) in 16S rRNA + S-adenosyl-L-homocysteine + H(+). Catalyzes the 2'-O-methylation of the ribose of cytidine 1402 (C1402) in 16S rRNA. This Mycoplasmopsis pulmonis (strain UAB CTIP) (Mycoplasma pulmonis) protein is Ribosomal RNA small subunit methyltransferase I.